A 179-amino-acid polypeptide reads, in one-letter code: Large ribosomal subunit protein uL5 (179 aa).

This sequence belongs to the universal ribosomal protein uL5 family. Part of the 50S ribosomal subunit; part of the 5S rRNA/L5/L18/L25 subcomplex. Contacts the 5S rRNA and the P site tRNA. Forms a bridge to the 30S subunit in the 70S ribosome.

Its function is as follows. This is one of the proteins that bind and probably mediate the attachment of the 5S RNA into the large ribosomal subunit, where it forms part of the central protuberance. In the 70S ribosome it contacts protein S13 of the 30S subunit (bridge B1b), connecting the 2 subunits; this bridge is implicated in subunit movement. Contacts the P site tRNA; the 5S rRNA and some of its associated proteins might help stabilize positioning of ribosome-bound tRNAs. The chain is Large ribosomal subunit protein uL5 from Burkholderia mallei (strain ATCC 23344).